We begin with the raw amino-acid sequence, 211 residues long: Redox-sensing transcriptional repressor Rex (211 aa).

A DNA-binding region (H-T-H motif) is located at residues Lys17–Phe56. Position 91–96 (Gly91–Gly96) interacts with NAD(+).

The protein belongs to the transcriptional regulatory Rex family. As to quaternary structure, homodimer.

It localises to the cytoplasm. In terms of biological role, modulates transcription in response to changes in cellular NADH/NAD(+) redox state. The protein is Redox-sensing transcriptional repressor Rex of Clostridium beijerinckii (strain ATCC 51743 / NCIMB 8052) (Clostridium acetobutylicum).